Consider the following 383-residue polypeptide: Lipid-A-disaccharide synthase (383 aa).

The protein belongs to the LpxB family.

The catalysed reaction is a lipid X + a UDP-2-N,3-O-bis[(3R)-3-hydroxyacyl]-alpha-D-glucosamine = a lipid A disaccharide + UDP + H(+). It functions in the pathway bacterial outer membrane biogenesis; LPS lipid A biosynthesis. Its function is as follows. Condensation of UDP-2,3-diacylglucosamine and 2,3-diacylglucosamine-1-phosphate to form lipid A disaccharide, a precursor of lipid A, a phosphorylated glycolipid that anchors the lipopolysaccharide to the outer membrane of the cell. The protein is Lipid-A-disaccharide synthase of Aliivibrio fischeri (strain MJ11) (Vibrio fischeri).